An 891-amino-acid polypeptide reads, in one-letter code: Genome polyprotein 2 (891 aa).

In terms of domain architecture, Peptidase C6 spans 109-229; the sequence is TAEFKSGFCY…GCEYMLYPVG (121 aa). Residues C117 and H189 each act as for helper component proteinase activity in the active site. The tract at residues 502–540 is disordered; the sequence is WVTLDSGDEDDDHSGGGGGGPQTPGGQPPASPAHRTHQS.

This sequence belongs to the bymoviruses polyprotein 2 family. In terms of processing, the viral RNA2 of bymoviruses is expressed as a single polyprotein which undergoes post-translational proteolytic processing resulting in the production of at least two individual proteins. The HC-pro cleaves its C-terminus autocatalytically (Potential).

It catalyses the reaction Hydrolyzes a Gly-|-Gly bond at its own C-terminus, commonly in the sequence -Tyr-Xaa-Val-Gly-|-Gly, in the processing of the potyviral polyprotein.. The protein is Genome polyprotein 2 (RNA2) of Hordeum vulgare (Barley).